A 45-amino-acid chain; its full sequence is Large ribosomal subunit protein bL34 (45 aa).

Residues 1 to 24 (MTKRTFGGTSRKRKRVSGFRVRMR) are disordered. Residues 10 to 24 (SRKRKRVSGFRVRMR) are compositionally biased toward basic residues.

This sequence belongs to the bacterial ribosomal protein bL34 family.

The chain is Large ribosomal subunit protein bL34 from Prochlorococcus marinus (strain MIT 9303).